A 642-amino-acid chain; its full sequence is Pheromone-processing carboxypeptidase kex1 (642 aa).

An N-terminal signal peptide occupies residues 1–30; that stretch reads MRSLTTKTSSALLTVWGLLSVSLMPSVGQA. Residues 31 to 522 are Lumenal-facing; that stretch reads DKTAGDYFVH…EAAKWNAYYK (492 aa). Active-site residues include S186 and D389. N-linked (GlcNAc...) asparagine glycosylation is found at N440 and N448. The active site involves H451. Positions 480–505 are disordered; it reads PTDSRIDGEKGLETSVGGHPNSTAAA. N500 is a glycosylation site (N-linked (GlcNAc...) asparagine). A helical membrane pass occupies residues 523–543; the sequence is SGEIVLVIVVIAASAWGYYIW. At 544–642 the chain is on the cytoplasmic side; sequence RERRQRAGYA…NGKGKEKSYS (99 aa). The tract at residues 598-642 is disordered; it reads ELDELHVRSPTDDMDRDRYSVGSASDDESIGKRNGNGKGKEKSYS. A compositionally biased stretch (basic and acidic residues) spans 600–616; it reads DELHVRSPTDDMDRDRY.

This sequence belongs to the peptidase S10 family.

Its subcellular location is the golgi apparatus. It is found in the trans-Golgi network membrane. It catalyses the reaction Preferential release of a C-terminal arginine or lysine residue.. Functionally, protease with a carboxypeptidase B-like function involved in the C-terminal processing of the lysine and arginine residues from protein precursors. Promotes cell fusion and is involved in the programmed cell death. The polypeptide is Pheromone-processing carboxypeptidase kex1 (kex1) (Sclerotinia sclerotiorum (strain ATCC 18683 / 1980 / Ss-1) (White mold)).